Here is a 348-residue protein sequence, read N- to C-terminus: Dihydroorotase (348 aa).

2 residues coordinate Zn(2+): histidine 17 and histidine 19. Substrate is bound by residues 19 to 21 (HLR) and asparagine 45. The Zn(2+) site is built by lysine 103, histidine 140, and histidine 178. Lysine 103 is modified (N6-carboxylysine). Histidine 140 serves as a coordination point for substrate. Leucine 223 contributes to the substrate binding site. Residue aspartate 251 coordinates Zn(2+). Aspartate 251 is a catalytic residue. Residues histidine 255 and alanine 267 each contribute to the substrate site.

This sequence belongs to the metallo-dependent hydrolases superfamily. DHOase family. Class II DHOase subfamily. Homodimer. Zn(2+) serves as cofactor.

The catalysed reaction is (S)-dihydroorotate + H2O = N-carbamoyl-L-aspartate + H(+). The protein operates within pyrimidine metabolism; UMP biosynthesis via de novo pathway; (S)-dihydroorotate from bicarbonate: step 3/3. Functionally, catalyzes the reversible cyclization of carbamoyl aspartate to dihydroorotate. The sequence is that of Dihydroorotase from Escherichia coli O139:H28 (strain E24377A / ETEC).